The following is a 553-amino-acid chain: Transcriptional regulator HilA (553 aa).

A DNA-binding region (ompR/PhoB-type) is located at residues 11–107; it reads NKKFVFDDFI…LYGQGYRFNR (97 aa). 4-aspartylphosphate is present on Asp62. The stretch at 372–405 is one TPR repeat; that stretch reads ADIKYYYGWNLFMAGQLEEALQTINECLKLDPTR.

The main transcriptional regulator of the Salmonella pathogenicity island 1 (SPI1) gene expression. Activates the expression of invasion genes by a direct action at their promoters and also indirectly by increasing the level of invF. Also binds upstream of prgH and directly activates the expression of prgHIJK operon. The sequence is that of Transcriptional regulator HilA (hilA) from Salmonella paratyphi A (strain ATCC 9150 / SARB42).